The following is a 378-amino-acid chain: Erythronate-4-phosphate dehydrogenase (378 aa).

2 residues coordinate substrate: S45 and T66. Residues D146 and T175 each contribute to the NAD(+) site. Residue R208 is part of the active site. D232 serves as a coordination point for NAD(+). E237 is an active-site residue. Catalysis depends on H254, which acts as the Proton donor. G257 is a binding site for NAD(+). Residue Y258 participates in substrate binding.

This sequence belongs to the D-isomer specific 2-hydroxyacid dehydrogenase family. PdxB subfamily. In terms of assembly, homodimer.

The protein resides in the cytoplasm. The enzyme catalyses 4-phospho-D-erythronate + NAD(+) = (R)-3-hydroxy-2-oxo-4-phosphooxybutanoate + NADH + H(+). The protein operates within cofactor biosynthesis; pyridoxine 5'-phosphate biosynthesis; pyridoxine 5'-phosphate from D-erythrose 4-phosphate: step 2/5. Catalyzes the oxidation of erythronate-4-phosphate to 3-hydroxy-2-oxo-4-phosphonooxybutanoate. This Escherichia coli O6:K15:H31 (strain 536 / UPEC) protein is Erythronate-4-phosphate dehydrogenase.